Consider the following 169-residue polypeptide: Lipoprotein signal peptidase (169 aa).

The next 3 membrane-spanning stretches (helical) occupy residues 12 to 32 (WLWL…WILG), 70 to 90 (WFFA…MYRS), and 102 to 122 (AFII…GFVV). Active-site residues include D123 and D141. Residues 137–157 (FNLADSFICVGAAMIVLEGFL) form a helical membrane-spanning segment.

It belongs to the peptidase A8 family.

The protein resides in the cell inner membrane. The catalysed reaction is Release of signal peptides from bacterial membrane prolipoproteins. Hydrolyzes -Xaa-Yaa-Zaa-|-(S,diacylglyceryl)Cys-, in which Xaa is hydrophobic (preferably Leu), and Yaa (Ala or Ser) and Zaa (Gly or Ala) have small, neutral side chains.. It participates in protein modification; lipoprotein biosynthesis (signal peptide cleavage). Its function is as follows. This protein specifically catalyzes the removal of signal peptides from prolipoproteins. The sequence is that of Lipoprotein signal peptidase from Serratia proteamaculans (strain 568).